The following is a 176-amino-acid chain: MVSQVRQNYHSDCEAAVNRMLNLELYASYTYSSMYAFFDRDDVALHNVAEFFKEHSHEEREHAEKFMKYQNKRGGRVVLQDIKKPERDEWGNTLEAMQAALQLEKTVNQALLDLHKLATDKVDPHLCDFLESEYLEEQVKDIKRIGDFITNLKRLGLPENGMGEYLFDKHSVKESS.

Residues 7-156 (QNYHSDCEAA…DFITNLKRLG (150 aa)) enclose the Ferritin-like diiron domain. Glu24, Glu59, His62, Glu104, Gln138, and Asp141 together coordinate Fe cation.

This sequence belongs to the ferritin family. Oligomer of 24 subunits. The functional molecule is roughly spherical and contains a central cavity into which the polymeric mineral iron core is deposited.

It catalyses the reaction 4 Fe(2+) + O2 + 4 H(+) = 4 Fe(3+) + 2 H2O. Functionally, stores iron in a soluble, non-toxic, readily available form. Important for iron homeostasis. Has ferroxidase activity. Iron is taken up in the ferrous form and deposited as ferric hydroxides after oxidation. In Aquarana catesbeiana (American bullfrog), this protein is Ferritin, middle subunit.